The sequence spans 314 residues: Ribosomal RNA large subunit methyltransferase F (314 aa).

It belongs to the methyltransferase superfamily. METTL16/RlmF family.

It is found in the cytoplasm. It carries out the reaction adenosine(1618) in 23S rRNA + S-adenosyl-L-methionine = N(6)-methyladenosine(1618) in 23S rRNA + S-adenosyl-L-homocysteine + H(+). Specifically methylates the adenine in position 1618 of 23S rRNA. The protein is Ribosomal RNA large subunit methyltransferase F of Flavobacterium psychrophilum (strain ATCC 49511 / DSM 21280 / CIP 103535 / JIP02/86).